A 535-amino-acid polypeptide reads, in one-letter code: Glucan 1,6-alpha-glucosidase (535 aa).

D194 (nucleophile) is an active-site residue. The active-site Proton donor is the E236.

It belongs to the glycosyl hydrolase 13 family.

The protein resides in the cytoplasm. The enzyme catalyses Hydrolysis of (1-&gt;6)-alpha-D-glucosidic linkages in (1-&gt;6)-alpha-D-glucans and derived oligosaccharides.. Functionally, the physiological substrates may be short isomaltosaccharides. In Streptococcus pneumoniae serotype 4 (strain ATCC BAA-334 / TIGR4), this protein is Glucan 1,6-alpha-glucosidase (dexB).